Consider the following 96-residue polypeptide: Co-chaperonin GroES (96 aa).

It belongs to the GroES chaperonin family. In terms of assembly, heptamer of 7 subunits arranged in a ring. Interacts with the chaperonin GroEL.

It localises to the cytoplasm. Together with the chaperonin GroEL, plays an essential role in assisting protein folding. The GroEL-GroES system forms a nano-cage that allows encapsulation of the non-native substrate proteins and provides a physical environment optimized to promote and accelerate protein folding. GroES binds to the apical surface of the GroEL ring, thereby capping the opening of the GroEL channel. The sequence is that of Co-chaperonin GroES from Actinobacillus pleuropneumoniae serotype 3 (strain JL03).